The following is a 161-amino-acid chain: Cytochrome c-type biogenesis protein CcmE (161 aa).

At 1 to 8 the chain is on the cytoplasmic side; sequence MNPRRKKR. A helical; Signal-anchor for type II membrane protein transmembrane segment spans residues 9-29; it reads LTLAVALVFGLGATIGLMLYA. Topologically, residues 30-161 are periplasmic; that stretch reads LSQNMDLFYT…SDEQKQGRVQ (132 aa). Residues H129 and Y133 each coordinate heme.

It belongs to the CcmE/CycJ family.

The protein localises to the cell inner membrane. In terms of biological role, heme chaperone required for the biogenesis of c-type cytochromes. Transiently binds heme delivered by CcmC and transfers the heme to apo-cytochromes in a process facilitated by CcmF and CcmH. The chain is Cytochrome c-type biogenesis protein CcmE from Photobacterium profundum (strain SS9).